The sequence spans 701 residues: Ubiquitin thioesterase zranb1-B (701 aa).

3 consecutive RanBP2-type zinc fingers follow at residues 3–33 (EDGI…PRPS), 79–108 (TSSK…QRRT), and 143–173 (IKGQ…PTPN). Positions 10, 13, 24, 27, 85, 88, 99, and 102 each coordinate Zn(2+). Positions 108 to 121 (TRSPTESPQSSGSG) are enriched in polar residues. A disordered region spans residues 108-129 (TRSPTESPQSSGSGLRSIPGPI). Positions 150, 153, 164, and 167 each coordinate Zn(2+). Residues 197-220 (RWRGGCSSSNSQRRSPPTSKRDSD) are disordered. Polar residues predominate over residues 202–214 (CSSSNSQRRSPPT). 2 ANK repeats span residues 253 to 283 (RKTD…SGGD) and 306 to 333 (YTLV…QHAA). An OTU domain is found at 425-585 (LYALWNRTAG…RGHFSALVAM (161 aa)). The active-site Nucleophile is Cys-436. The active-site Proton acceptor is His-578.

This sequence belongs to the peptidase C64 family.

It is found in the cytoplasm. It localises to the nucleus. It carries out the reaction Thiol-dependent hydrolysis of ester, thioester, amide, peptide and isopeptide bonds formed by the C-terminal Gly of ubiquitin (a 76-residue protein attached to proteins as an intracellular targeting signal).. In terms of biological role, ubiquitin thioesterase, which specifically hydrolyzes 'Lys-29'-linked and 'Lys-33'-linked diubiquitin. Also cleaves 'Lys-63'-linked chains, but with 40-fold less efficiency compared to 'Lys-29'-linked ones. Positive regulator of the Wnt signaling pathway that deubiquitinates apc protein, a negative regulator of Wnt-mediated transcription. Acts as a regulator of autophagy by mediating deubiquitination of pik3c3/vps34, thereby promoting autophagosome maturation. Plays a role in the regulation of cell morphology and cytoskeletal organization. Required in the stress fiber dynamics and cell migration. This Xenopus laevis (African clawed frog) protein is Ubiquitin thioesterase zranb1-B (zranb1-b).